Consider the following 395-residue polypeptide: FAD-dependent urate hydroxylase (395 aa).

FAD-binding positions include Gly11, 30–31, Ser43, and Met125; that span reads ER. Substrate-binding positions include Asn180, Arg206, and 218–220; that span reads YFF. Residues Asp287 and 297–301 contribute to the FAD site; that span reads GQGGC.

Belongs to the FAD-dependent urate hydroxylase family. In terms of assembly, monomer. Requires FAD as cofactor.

The enzyme catalyses urate + NADH + O2 + H(+) = 5-hydroxyisourate + NAD(+) + H2O. It functions in the pathway purine metabolism; urate degradation. Catalyzes the hydroxylation of urate to 5-hydroxyisourate (HIU). Is likely to be involved in the urate degradation pathway to allantoin. Prefers NADH over NADPH as the electron donor. In Mycolicibacterium vanbaalenii (strain DSM 7251 / JCM 13017 / BCRC 16820 / KCTC 9966 / NRRL B-24157 / PYR-1) (Mycobacterium vanbaalenii), this protein is FAD-dependent urate hydroxylase.